We begin with the raw amino-acid sequence, 643 residues long: Threonine--tRNA ligase (643 aa).

The 61-residue stretch at Met-1–Thr-61 folds into the TGS domain. Residues Asp-243 to Pro-534 form a catalytic region. Zn(2+) is bound by residues Cys-334, His-385, and His-511.

The protein belongs to the class-II aminoacyl-tRNA synthetase family. In terms of assembly, homodimer. Zn(2+) serves as cofactor.

The protein localises to the cytoplasm. The enzyme catalyses tRNA(Thr) + L-threonine + ATP = L-threonyl-tRNA(Thr) + AMP + diphosphate + H(+). Functionally, catalyzes the attachment of threonine to tRNA(Thr) in a two-step reaction: L-threonine is first activated by ATP to form Thr-AMP and then transferred to the acceptor end of tRNA(Thr). Also edits incorrectly charged L-seryl-tRNA(Thr). The sequence is that of Threonine--tRNA ligase from Haemophilus influenzae (strain 86-028NP).